We begin with the raw amino-acid sequence, 503 residues long: Na(+)-translocating NADH-quinone reductase subunit B (503 aa).

Helical transmembrane passes span 55 to 75 (MMLV…NSGL), 94 to 114 (ISGF…VPIL), 120 to 140 (IFIP…VLFA), 161 to 181 (TLPP…GIVV), and 186 to 206 (FGGT…FLFF). An FMN phosphoryl threonine modification is found at T248. 5 helical membrane-spanning segments follow: residues 361–381 (TSTF…IASW), 386–406 (AFGI…VLIV), 417–437 (FFIP…LVFM), 452–472 (WIYG…NPAY), and 475–495 (GVML…YFAV).

This sequence belongs to the NqrB/RnfD family. In terms of assembly, composed of six subunits; NqrA, NqrB, NqrC, NqrD, NqrE and NqrF. FMN is required as a cofactor.

Its subcellular location is the cell inner membrane. The catalysed reaction is a ubiquinone + n Na(+)(in) + NADH + H(+) = a ubiquinol + n Na(+)(out) + NAD(+). Functionally, NQR complex catalyzes the reduction of ubiquinone-1 to ubiquinol by two successive reactions, coupled with the transport of Na(+) ions from the cytoplasm to the periplasm. NqrA to NqrE are probably involved in the second step, the conversion of ubisemiquinone to ubiquinol. This chain is Na(+)-translocating NADH-quinone reductase subunit B, found in Chlamydia pneumoniae (Chlamydophila pneumoniae).